Reading from the N-terminus, the 431-residue chain is tRNA(Ile)-lysidine synthase (431 aa).

Residue 25-30 coordinates ATP; that stretch reads SGGPDS.

It belongs to the tRNA(Ile)-lysidine synthase family.

The protein resides in the cytoplasm. The enzyme catalyses cytidine(34) in tRNA(Ile2) + L-lysine + ATP = lysidine(34) in tRNA(Ile2) + AMP + diphosphate + H(+). Ligates lysine onto the cytidine present at position 34 of the AUA codon-specific tRNA(Ile) that contains the anticodon CAU, in an ATP-dependent manner. Cytidine is converted to lysidine, thus changing the amino acid specificity of the tRNA from methionine to isoleucine. In Lactobacillus johnsonii (strain CNCM I-12250 / La1 / NCC 533), this protein is tRNA(Ile)-lysidine synthase.